The primary structure comprises 275 residues: Large ribosomal subunit protein uL2 (275 aa).

2 disordered regions span residues 28 to 59 (KPFA…GGHK) and 224 to 275 (AMNP…RHKR). Residues 35-49 (DSQSTTAGRNNNGHI) show a composition bias toward polar residues. Positions 50–59 (TTRHKGGGHK) are enriched in basic residues.

It belongs to the universal ribosomal protein uL2 family. In terms of assembly, part of the 50S ribosomal subunit. Forms a bridge to the 30S subunit in the 70S ribosome.

One of the primary rRNA binding proteins. Required for association of the 30S and 50S subunits to form the 70S ribosome, for tRNA binding and peptide bond formation. It has been suggested to have peptidyltransferase activity; this is somewhat controversial. Makes several contacts with the 16S rRNA in the 70S ribosome. In Paraburkholderia xenovorans (strain LB400), this protein is Large ribosomal subunit protein uL2.